A 291-amino-acid polypeptide reads, in one-letter code: Glycine--tRNA ligase alpha subunit (291 aa).

It belongs to the class-II aminoacyl-tRNA synthetase family. Tetramer of two alpha and two beta subunits.

The protein resides in the cytoplasm. It catalyses the reaction tRNA(Gly) + glycine + ATP = glycyl-tRNA(Gly) + AMP + diphosphate. In Nitratidesulfovibrio vulgaris (strain DSM 19637 / Miyazaki F) (Desulfovibrio vulgaris), this protein is Glycine--tRNA ligase alpha subunit.